The following is a 175-amino-acid chain: Large ribosomal subunit protein bL17m (175 aa).

The N-terminal 8 residues, 1–8 (MRLSVAAA), are a transit peptide targeting the mitochondrion. The disordered stretch occupies residues 155-175 (DLRQSQEASNHSSHTAQTPGI). Polar residues predominate over residues 161-175 (EASNHSSHTAQTPGI).

It belongs to the bacterial ribosomal protein bL17 family. In terms of assembly, component of the mitochondrial large ribosomal subunit (mt-LSU). Mature mammalian 55S mitochondrial ribosomes consist of a small (28S) and a large (39S) subunit. The 28S small subunit contains a 12S ribosomal RNA (12S mt-rRNA) and 30 different proteins. The 39S large subunit contains a 16S rRNA (16S mt-rRNA), a copy of mitochondrial valine transfer RNA (mt-tRNA(Val)), which plays an integral structural role, and 52 different proteins. Detected in adrenal gland, mammary gland and adipose tissue.

The protein resides in the mitochondrion. In Homo sapiens (Human), this protein is Large ribosomal subunit protein bL17m (MRPL17).